The sequence spans 631 residues: MEKNGTVHTGTVRQSLGLSLAALGVVYGDIGTSPLYAMRECFHGTHPHPATPDNVLGVLSLIVWALILIVSLKYLVFVLRADNRGEGGILALTALLNPWGDENRPPRKVLVFLGLFGAALLYGDGTLTPAISVLSAIEGLKIATPLFHPYIVPITVVILILLFLIQHRGTARVGALFGPVMVLWFTVLALLGIRGIMMAPEVLGALNPLHAVLFFVRDGWSGFQVLGAVFLVVTGGEALYADMGHFGRLPIRLAWFCCVLPALLLNYFGQGALLLSDPSEATEPFYHLAPPWALYPLVLLATLATIIASQAVISGVFSLTRQAIQLRLSPRMRIVQTSSEEIGQIYIPAVNWALMLATITLVAGFGSSSGLAAAYGVAVATTMVITALLVRFVMLERWHWHPLAVAGLTVVFLTVDLAFFGANILKVGAGGWIPLAAGLAVFTVMITWRRGRELVTTHLLAQATPLPSFLEELAAKPPQRVPGTAVFMSGRLFPAPPTLIHHLEHNKVLHEQVVILTVLTEDIPRVSASERIELKRLGQGFYRLIVRYGFMQSPNVPVILRECEPLGLVTDPETTTFYLGRETLIPTEKVSGMPHWREKLFAFMSRNSLQATAFYNLPPDRVVELGQQVEI.

12 helical membrane-spanning segments follow: residues 16–36, 58–78, 109–129, 145–165, 173–193, 219–239, 255–275, 288–308, 345–365, 370–390, 402–422, and 427–447; these read LGLSLAALGVVYGDIGTSPLY, VLSLIVWALILIVSLKYLVFV, VLVFLGLFGAALLYGDGTLTP, PLFHPYIVPITVVILILLFLI, VGALFGPVMVLWFTVLALLGI, GWSGFQVLGAVFLVVTGGEAL, WFCCVLPALLLNYFGQGALLL, LAPPWALYPLVLLATLATIIA, IYIPAVNWALMLATITLVAGF, GLAAAYGVAVATTMVITALLV, PLAVAGLTVVFLTVDLAFFGA, and VGAGGWIPLAAGLAVFTVMIT.

Belongs to the HAK/KUP transporter (TC 2.A.72) family.

It localises to the cell inner membrane. The enzyme catalyses K(+)(in) + H(+)(in) = K(+)(out) + H(+)(out). Transport of potassium into the cell. Likely operates as a K(+):H(+) symporter. The sequence is that of Probable potassium transport system protein Kup 1 from Geobacter sulfurreducens (strain ATCC 51573 / DSM 12127 / PCA).